Consider the following 377-residue polypeptide: MSTPSQAEVRRMVAAAGTIVVKVGSSSLTQPSGHLDPDKLDALAAALAQIRLMGGRVVLVSSGAIAAGFGPLGFDERPADVATQQATAAVGQGLLMARYETAFGRFGIRVGQILITAEDTIRATQYRNVERTLDRLLDLGVVPIINENDSLASNEIRFGDNDRLSALVANLVRAEALVLLTDVDALYTAPPSQPGSRRVEYVPNVIDALGDIQVSGSGSKVGTGGMVTKLEAARVAAVSGIPTVLTCASNAGPAMMGDPVGTVFAPVKARGSSRRLWIGFAADPRGAIVVDAGAGQAIRGGRASLLATGALEVHGDFSAGDPVWIDAESGEHLARGLAGFDSEEIPQMLGRNTAQLKRFLGPQYAHPLIHRDNLVLV.

Lys22 lines the ATP pocket. Residues Ser62, Asp149, and Asn161 each coordinate substrate. ATP-binding positions include 181 to 182 (TD) and 223 to 229 (TGGMVTK). The region spanning 285–363 (RGAIVVDAGA…AQLKRFLGPQ (79 aa)) is the PUA domain.

It belongs to the glutamate 5-kinase family.

Its subcellular location is the cytoplasm. The catalysed reaction is L-glutamate + ATP = L-glutamyl 5-phosphate + ADP. The protein operates within amino-acid biosynthesis; L-proline biosynthesis; L-glutamate 5-semialdehyde from L-glutamate: step 1/2. Functionally, catalyzes the transfer of a phosphate group to glutamate to form L-glutamate 5-phosphate. This is Glutamate 5-kinase from Bifidobacterium longum subsp. infantis (strain ATCC 15697 / DSM 20088 / JCM 1222 / NCTC 11817 / S12).